A 462-amino-acid chain; its full sequence is Sugar transporter ERD6-like 2 (462 aa).

A run of 12 helical transmembrane segments spans residues 23-43 (SGLLLSTSVVVAGSFCYGCAM), 70-90 (VMTLGGMITAVFSGKISALVG), 96-116 (WISDVCCIFGWLAVAFAHDII), 123-143 (LFLGFGVGLISYVVPVYIAEI), 156-176 (NQLLQCLGISLMFFTGNFFHW), 178-198 (TLALLSAIPSAFQVICLFFIP), 261-281 (LIIGLGLMLLQQFCGSAAISA), 296-316 (IGTTILAVILIPQSIVVMLTV), 324-344 (LLMISSIGMCICSFFIGLSYY), 357-377 (VMLIVGLVGYVSSFGIGLGGL), 397-417 (LVTMSNWFFNWIIIYSFNFMI), and 423-443 (GTYFIFSGVSLVTIVFIWTLV).

Belongs to the major facilitator superfamily. Sugar transporter (TC 2.A.1.1) family.

It is found in the membrane. Its function is as follows. Sugar transporter. The polypeptide is Sugar transporter ERD6-like 2 (SUGTL3) (Arabidopsis thaliana (Mouse-ear cress)).